Reading from the N-terminus, the 450-residue chain is Acyltransferase GLAUCE (450 aa).

Active-site proton acceptor residues include histidine 171 and glutamate 394.

This sequence belongs to the plant acyltransferase family. In terms of tissue distribution, restricted to the central cells of embryo sacs.

The protein resides in the cytoplasm. It localises to the nucleus. Functionally, required for double fertilization of the egg cell and the central cell by two sperm cells, resulting in the formation of the embryo and the endosperm. Involved in the regulation of embryonic expression of PHE1. Essential in maternal tissues to ensure the paternal embryonic expression of several genes, including RPS5a and FAC1, both of which being essential for early embryo and endosperm development in fertilized seeds. This chain is Acyltransferase GLAUCE, found in Arabidopsis thaliana (Mouse-ear cress).